The chain runs to 342 residues: Dihydroorotase (342 aa).

Residues His13 and His15 each coordinate Zn(2+). Residues 15 to 17 (HLR) and Asn41 contribute to the substrate site. Lys98, His135, and His173 together coordinate Zn(2+). Lys98 bears the N6-carboxylysine mark. His135 contacts substrate. Leu218 serves as a coordination point for substrate. Position 246 (Asp246) interacts with Zn(2+). Residue Asp246 is part of the active site. The substrate site is built by His250 and Ala262.

It belongs to the metallo-dependent hydrolases superfamily. DHOase family. Class II DHOase subfamily. As to quaternary structure, homodimer. It depends on Zn(2+) as a cofactor.

It catalyses the reaction (S)-dihydroorotate + H2O = N-carbamoyl-L-aspartate + H(+). It functions in the pathway pyrimidine metabolism; UMP biosynthesis via de novo pathway; (S)-dihydroorotate from bicarbonate: step 3/3. Functionally, catalyzes the reversible cyclization of carbamoyl aspartate to dihydroorotate. This Vibrio parahaemolyticus serotype O3:K6 (strain RIMD 2210633) protein is Dihydroorotase.